The sequence spans 356 residues: 5-formaminoimidazole-4-carboxamide-1-(beta)-D-ribofuranosyl 5'-monophosphate synthetase (356 aa).

5-amino-1-(5-phospho-beta-D-ribosyl)imidazole-4-carboxamide-binding residues include His-27 and Ser-94. In terms of domain architecture, ATP-grasp spans 101–333 (TENFAELTVP…YADLIQEDLS (233 aa)). ATP-binding positions include 145-196 (PRDI…TRYY) and Glu-226. Position 255 (Asn-255) interacts with 5-amino-1-(5-phospho-beta-D-ribosyl)imidazole-4-carboxamide. Positions 293 and 306 each coordinate Mg(2+).

It belongs to the phosphohexose mutase family. Mg(2+) serves as cofactor. It depends on Mn(2+) as a cofactor.

The catalysed reaction is 5-amino-1-(5-phospho-beta-D-ribosyl)imidazole-4-carboxamide + formate + ATP = 5-formamido-1-(5-phospho-D-ribosyl)imidazole-4-carboxamide + ADP + phosphate. The protein operates within purine metabolism; IMP biosynthesis via de novo pathway; 5-formamido-1-(5-phospho-D-ribosyl)imidazole-4-carboxamide from 5-amino-1-(5-phospho-D-ribosyl)imidazole-4-carboxamide (formate route): step 1/1. In terms of biological role, catalyzes the ATP- and formate-dependent formylation of 5-aminoimidazole-4-carboxamide-1-beta-d-ribofuranosyl 5'-monophosphate (AICAR) to 5-formaminoimidazole-4-carboxamide-1-beta-d-ribofuranosyl 5'-monophosphate (FAICAR) in the absence of folates. The polypeptide is 5-formaminoimidazole-4-carboxamide-1-(beta)-D-ribofuranosyl 5'-monophosphate synthetase (Methanosarcina acetivorans (strain ATCC 35395 / DSM 2834 / JCM 12185 / C2A)).